Consider the following 255-residue polypeptide: EEF1A lysine methyltransferase 4 (255 aa).

Residues tryptophan 26 and tyrosine 30 each coordinate S-adenosyl-L-methionine. Position 39 is a phosphotyrosine (tyrosine 39). Residues tryptophan 41, glycine 66, 88-89 (DY), 113-114 (DV), and lysine 130 contribute to the S-adenosyl-L-methionine site. The Required for methyltransferase activity signature appears at 129 to 134 (EKGTLD).

This sequence belongs to the methyltransferase superfamily.

The enzyme catalyses L-lysyl-[protein] + S-adenosyl-L-methionine = N(6)-methyl-L-lysyl-[protein] + S-adenosyl-L-homocysteine + H(+). It carries out the reaction N(6)-methyl-L-lysyl-[protein] + S-adenosyl-L-methionine = N(6),N(6)-dimethyl-L-lysyl-[protein] + S-adenosyl-L-homocysteine + H(+). It catalyses the reaction N(6),N(6)-dimethyl-L-lysyl-[protein] + S-adenosyl-L-methionine = N(6),N(6),N(6)-trimethyl-L-lysyl-[protein] + S-adenosyl-L-homocysteine + H(+). Its function is as follows. Protein-lysine methyltransferase that efficiently catalyzes three successive methylations on 'Lys-36' in eukaryotic translation elongation factor 1 alpha (EEF1A1 or EEF1A2). This is EEF1A lysine methyltransferase 4 from Bos taurus (Bovine).